A 254-amino-acid polypeptide reads, in one-letter code: MAVDFTTDELDEVASLIARSSCNVALTGAGVSTASGIPDFRGPQGVWRRVDPEKFEISYFYNNPDEVWDLFVKYLLPAFNVKPNPAHYALAEMERLGKLCAVITQNVDRLHQAAGSKNVIELHGALEYAVCTNCGSKYALAEALKWRKSGAPRCPKCGGVIKPDVVFFGEPLPQDALREAFMLAEMAEVFMAIGTSLAVYPANQLPLVAKKRGAKLVIINADETYYDFFADYIIRGRAEEVLPKLLDRLRGMLF.

The region spanning 3–252 is the Deacetylase sirtuin-type domain; sequence VDFTTDELDE…PKLLDRLRGM (250 aa). Residues Ala-29, Thr-33, Phe-40, Arg-41, Gln-105, Val-107, Asp-108, and His-123 each contribute to the NAD(+) site. Position 40 (Phe-40) interacts with nicotinamide. Residues Val-107 and Asp-108 each contribute to the nicotinamide site. The active-site Proton acceptor is His-123. Residues Cys-131, Cys-134, Cys-154, and Cys-157 each contribute to the Zn(2+) site. Positions 195, 196, and 220 each coordinate NAD(+).

Belongs to the sirtuin family. Class U subfamily. Zn(2+) is required as a cofactor.

It is found in the cytoplasm. The catalysed reaction is N(6)-acetyl-L-lysyl-[protein] + NAD(+) + H2O = 2''-O-acetyl-ADP-D-ribose + nicotinamide + L-lysyl-[protein]. Functionally, NAD-dependent protein deacetylase which modulates the activities of several enzymes which are inactive in their acetylated form. Deacetylates the N-terminal lysine residue of Alba, the major archaeal chromatin protein and that, in turn, increases Alba's DNA binding affinity, thereby repressing transcription. The protein is NAD-dependent protein deacetylase 1 of Pyrobaculum aerophilum (strain ATCC 51768 / DSM 7523 / JCM 9630 / CIP 104966 / NBRC 100827 / IM2).